The sequence spans 490 residues: Cytochrome P450 2C7 (490 aa).

Arginine 144 carries the post-translational modification Dimethylated arginine. Position 435 (cysteine 435) interacts with heme.

It belongs to the cytochrome P450 family. It depends on heme as a cofactor.

The protein localises to the endoplasmic reticulum membrane. It localises to the microsome membrane. It catalyses the reaction an organic molecule + reduced [NADPH--hemoprotein reductase] + O2 = an alcohol + oxidized [NADPH--hemoprotein reductase] + H2O + H(+). Cytochromes P450 are a group of heme-thiolate monooxygenases. In liver microsomes, this enzyme is involved in an NADPH-dependent electron transport pathway. It oxidizes a variety of structurally unrelated compounds, including steroids, fatty acids, and xenobiotics. The protein is Cytochrome P450 2C7 (Cyp2c7) of Rattus norvegicus (Rat).